The primary structure comprises 192 residues: Probable nicotinate-nucleotide adenylyltransferase (192 aa).

Belongs to the NadD family.

The enzyme catalyses nicotinate beta-D-ribonucleotide + ATP + H(+) = deamido-NAD(+) + diphosphate. It functions in the pathway cofactor biosynthesis; NAD(+) biosynthesis; deamido-NAD(+) from nicotinate D-ribonucleotide: step 1/1. Its function is as follows. Catalyzes the reversible adenylation of nicotinate mononucleotide (NaMN) to nicotinic acid adenine dinucleotide (NaAD). The sequence is that of Probable nicotinate-nucleotide adenylyltransferase from Rhizobium etli (strain ATCC 51251 / DSM 11541 / JCM 21823 / NBRC 15573 / CFN 42).